The sequence spans 4960 residues: Malformin synthetase mlfA (4960 aa).

The segment at 194–564 is adenylation 1; it reads ERHATNRPHS…CGRADTQVKL (371 aa). Residues 705-778 enclose the Carrier 1 domain; it reads SRLEQEVQLA…EAASLAEVQE (74 aa). Position 739 is an O-(pantetheine 4'-phosphoryl)serine (serine 739). A condensation 1 region spans residues 816 to 1247; that stretch reads EDVFPCTTMQ…ALNTLSLLQA (432 aa). The interval 1275-1650 is adenylation 2; the sequence is DRWVTRQPEG…GRKDTQVKLR (376 aa). Residues 1777–1854 enclose the Carrier 2 domain; it reads TPASELERTL…HLAAEVGEPA (78 aa). Disordered regions lie at residues 1855 to 1883 and 1917 to 1943; these read GQSA…NDGV and GGSS…KKNA. Composition is skewed to low complexity over residues 1857–1881 and 1919–1936; these read SASS…STND and SSSN…SSSS. The segment at 1989 to 2404 is condensation 2; the sequence is EDIYPATALQ…AVSCSDKETL (416 aa). The segment at 2427-2819 is adenylation 3; the sequence is RRTPHAPAVC…IGRRDGQLKL (393 aa). A Carrier 3 domain is found at 2955–3031; it reads RPVTSQEREM…QLICHINTIR (77 aa). At serine 2992 the chain carries O-(pantetheine 4'-phosphoryl)serine. Condensation regions lie at residues 3049–3464 and 3520–3889; these read VALA…FTFP and SGYV…EQLV. The interval 3914–4304 is adenylation 4; it reads HNSRQAVCAW…VGRKDNQIKF (391 aa). In terms of domain architecture, Carrier 4 spans 4438–4514; sequence MPSTAAERKM…DLSDQAKSLI (77 aa). Residue serine 4475 is modified to O-(pantetheine 4'-phosphoryl)serine. The tract at residues 4551 to 4878 is condensation 5; the sequence is DVLPTTSFQH…LQTIVQHQNN (328 aa).

Belongs to the NRP synthetase family.

It functions in the pathway secondary metabolite biosynthesis. Functionally, nonribosomal peptide synthetase; part of the gene cluster that mediates the biosynthesis of malformins, cyclic pentapeptides with a disulfide bond between 2 consecutive cysteins, that show potential anti-tumor as well as antimalarial and antitrypanosomal properties. The nonribosomal peptide synthetase mlfA is responsible of the formation of the cyclic pentapeptide. The malformin biosynthesis clusters in malformin-producing fungi also contain enzymes involved in the formation of the disulfide bond between the two consecutive cysteins within malformins, in addition to additional tailoring enzymes such as methyltransferases or oxidoreductases. They are also composed of up to 4 major facilitator superfamily transporters, and transcription factors probably involved in the regulation of the expression of those clusters. The polypeptide is Malformin synthetase mlfA (Aspergillus neoniger (strain CBS 115656)).